The sequence spans 412 residues: Small ribosomal subunit protein mL103 (rPPR7) (412 aa).

Residues Met-1–Phe-14 constitute a mitochondrion transit peptide. Positions Gly-21–Lys-37 are enriched in polar residues. Positions Gly-21–Glu-43 are disordered. PPR repeat units lie at residues Glu-101–Arg-135, Ser-136–Arg-166, Asp-173–Val-207, Thr-208–Leu-242, Asp-243–Pro-276, Asp-277–Pro-311, Asn-312–Pro-346, and Asp-347–Lys-377.

This sequence belongs to the PPR family. P subfamily. Component of the mitochondrial ribosome small subunit.

It is found in the mitochondrion. This chain is Small ribosomal subunit protein mL103 (rPPR7), found in Arabidopsis thaliana (Mouse-ear cress).